Reading from the N-terminus, the 429-residue chain is 4-hydroxyphenylacetate degradation bifunctional isomerase/decarboxylase (429 aa).

Approximate repeat units follow at residues Met-1–Phe-215 and Thr-216–Asn-429. A divalent metal cation-binding residues include Glu-276, Glu-278, and Asp-307.

This sequence belongs to the FAH family. In terms of assembly, monomer. Requires Mg(2+) as cofactor.

The catalysed reaction is (2E,4Z)-5-hydroxypenta-2,4-diene-1,2,5-tricarboxylate = (3E,5R)-5-carboxy-2-oxohept-3-enedioate. It carries out the reaction (3E,5R)-5-carboxy-2-oxohept-3-enedioate + H(+) = (4Z)-2-oxohept-4-enedioate + CO2. The protein operates within aromatic compound metabolism; 4-hydroxyphenylacetate degradation; pyruvate and succinate semialdehyde from 4-hydroxyphenylacetate: step 4/7. It participates in aromatic compound metabolism; 4-hydroxyphenylacetate degradation; pyruvate and succinate semialdehyde from 4-hydroxyphenylacetate: step 5/7. Functionally, decarboxylates OPET (5-oxo-pent-3-ene-1,2,5-tricarboxylic acid) into HHDD (2-hydroxy-hept-2,4-diene-1,7-dioate) and isomerizes it to OHED (2-oxo-hept-3-ene-1,7-dioate). The chain is 4-hydroxyphenylacetate degradation bifunctional isomerase/decarboxylase (hpaG) from Salmonella dublin.